The following is a 182-amino-acid chain: Large ribosomal subunit protein uL10 (182 aa).

The protein belongs to the universal ribosomal protein uL10 family. As to quaternary structure, part of the ribosomal stalk of the 50S ribosomal subunit. The N-terminus interacts with L11 and the large rRNA to form the base of the stalk. The C-terminus forms an elongated spine to which L12 dimers bind in a sequential fashion forming a multimeric L10(L12)X complex.

In terms of biological role, forms part of the ribosomal stalk, playing a central role in the interaction of the ribosome with GTP-bound translation factors. The polypeptide is Large ribosomal subunit protein uL10 (Parafrankia sp. (strain EAN1pec)).